Consider the following 710-residue polypeptide: MGMSKSRGCFGYPLSIFFIVVNEFCERFSYYGMRALLVLYFRNFLGWDDDLSTAIYHTFVALCYLTPILGALIADSWLGKFKTIVSLSIVYTIGQAVISVSSINDLTDHDHDGSPNNLPLHVALSMIGLALIALGTGGIKPCVSAFGGDQFEEGQEKQRNRFFSIFYLAINAGSLLSTIITPILRVQQCGIHSQQACYPLAFGVPAALMAVALIVFVLGSGMYKKFQPQGNIMGKVAKCIRFAIKNRFRHRSKAFPKRNHWLDWAKEKYDERLISQIKIMTKVMFLYIPLPMFWALFDQQGSRWTLQATTMTGKIGTIEIQPDQMQTVNAILIVIMVPIVDAVVYPLIAKCGFNFTSLKKMTVGMFLASMAFVVAAIVQVEIDKTLPVFPSGNQVQIKVLNIGNNDMAVYFPGKNVTVAQMSQTDTFMTFDVDQLTSINVSSPGSPGVTTVAHEFEPGHRHTLLVWGPNLYRVVKDGLNQKPEKGENGIRFVSTLNEMITIKMSGKVYENVTSHSASNYQFFPSGQKDYTINTTEIAPNCSSDFKSSNLDFGSAYTYVIRSRASDGCLEVKEFEDIPPNTVNMALQIPQYFLLTCGEVVFSVTGLEFSYSQAPSNMKSVLQAGWLLTVAIGNIIVLIVAEAGHFDKQWAEYVLFASLLLVVCIIFAIMARFYTYINPAEIEAQFDEDEKKKGVGKENPYSSLEPVSQTNM.

Residues 1 to 21 (MGMSKSRGCFGYPLSIFFIVV) traverse the membrane as a helical segment. The Extracellular portion of the chain corresponds to 22–53 (NEFCERFSYYGMRALLVLYFRNFLGWDDDLST). Residues 54–74 (AIYHTFVALCYLTPILGALIA) form a helical membrane-spanning segment. The Cytoplasmic segment spans residues 75–82 (DSWLGKFK). The helical transmembrane segment at 83 to 103 (TIVSLSIVYTIGQAVISVSSI) threads the bilayer. Residues 104 to 118 (NDLTDHDHDGSPNNL) lie on the Extracellular side of the membrane. The chain crosses the membrane as a helical span at residues 119–139 (PLHVALSMIGLALIALGTGGI). The Cytoplasmic segment spans residues 140-161 (KPCVSAFGGDQFEEGQEKQRNR). The chain crosses the membrane as a helical span at residues 162–182 (FFSIFYLAINAGSLLSTIITP). Over 183–198 (ILRVQQCGIHSQQACY) the chain is Extracellular. The helical transmembrane segment at 199 to 219 (PLAFGVPAALMAVALIVFVLG) threads the bilayer. Residues 220–276 (SGMYKKFQPQGNIMGKVAKCIRFAIKNRFRHRSKAFPKRNHWLDWAKEKYDERLISQ) lie on the Cytoplasmic side of the membrane. The chain crosses the membrane as a helical span at residues 277-297 (IKIMTKVMFLYIPLPMFWALF). Residues 298 to 327 (DQQGSRWTLQATTMTGKIGTIEIQPDQMQT) are Extracellular-facing. The chain crosses the membrane as a helical span at residues 328–348 (VNAILIVIMVPIVDAVVYPLI). Residues 349-361 (AKCGFNFTSLKKM) lie on the Cytoplasmic side of the membrane. The chain crosses the membrane as a helical span at residues 362–382 (TVGMFLASMAFVVAAIVQVEI). The Extracellular portion of the chain corresponds to 383–586 (DKTLPVFPSG…PPNTVNMALQ (204 aa)). The segment at 383 to 586 (DKTLPVFPSG…PPNTVNMALQ (204 aa)) is extracellular domain (ECD). 5 N-linked (GlcNAc...) asparagine glycosylation sites follow: N415, N439, N510, N532, and N539. A helical membrane pass occupies residues 587–607 (IPQYFLLTCGEVVFSVTGLEF). Residues 608 to 621 (SYSQAPSNMKSVLQ) lie on the Cytoplasmic side of the membrane. A helical membrane pass occupies residues 622–642 (AGWLLTVAIGNIIVLIVAEAG). The Extracellular portion of the chain corresponds to 643 to 647 (HFDKQ). Residues 648 to 668 (WAEYVLFASLLLVVCIIFAIM) form a helical membrane-spanning segment. The Cytoplasmic segment spans residues 669–710 (ARFYTYINPAEIEAQFDEDEKKKGVGKENPYSSLEPVSQTNM). Residues 687-710 (DEKKKGVGKENPYSSLEPVSQTNM) are disordered. The span at 698 to 710 (PYSSLEPVSQTNM) shows a compositional bias: polar residues.

Belongs to the major facilitator superfamily. Proton-dependent oligopeptide transporter (POT/PTR) (TC 2.A.17) family. As to quaternary structure, interacts (via extracellular domain region) with trypsin. As to expression, highly expressed in small intestine. In terms of tissue distribution, expression is restricted to pinealocytes.

The protein resides in the apical cell membrane. The enzyme catalyses a dipeptide(out) + H(+)(out) = a dipeptide(in) + H(+)(in). It carries out the reaction an L-amino acid tripeptide(out) + H(+)(out) = an L-amino acid tripeptide(in) + H(+)(in). It catalyses the reaction L-alanyl-L-lysine(out) + H(+)(out) = L-alanyl-L-lysine(in) + H(+)(in). The catalysed reaction is L-alanyl-L-proline(out) + H(+)(out) = L-alanyl-L-proline(in) + H(+)(in). The enzyme catalyses L-alanyl-L-valine(out) + H(+)(out) = L-alanyl-L-valine(in) + H(+)(in). It carries out the reaction carnosine(out) + H(+)(out) = carnosine(in) + H(+)(in). It catalyses the reaction glycyl-L-glutamine(out) + H(+)(out) = glycyl-L-glutamine(in) + H(+)(in). The catalysed reaction is glycyl-L-leucine(out) + H(+)(out) = glycyl-L-leucine(in) + H(+)(in). The enzyme catalyses glycyl-L-proline(out) + H(+)(out) = glycyl-L-proline(in) + H(+)(in). It carries out the reaction glycyl-sarcosine(out) + H(+)(out) = glycyl-sarcosine(in) + H(+)(in). It catalyses the reaction L-leucyl-L-leucine(out) + H(+)(out) = L-leucyl-L-leucine(in) + H(+)(in). The catalysed reaction is L-leucyl-L-proline(out) + H(+)(out) = L-leucyl-L-proline(in) + H(+)(in). The enzyme catalyses L-phenylalanyl-L-leucine(out) + H(+)(out) = L-phenylalanyl-L-leucine(in) + H(+)(in). It carries out the reaction L-phenylalanyl-L-phenylalanine(out) + H(+)(out) = L-phenylalanyl-L-phenylalanine(in) + H(+)(in). It catalyses the reaction L-lysyl-glycine(out) + H(+)(out) = L-lysyl-glycine(in) + H(+)(in). The catalysed reaction is L-tyrosylglycine(out) + H(+)(out) = L-tyrosylglycine(in) + H(+)(in). The enzyme catalyses L-alanyl-L-aspartate(out) + 2 H(+)(out) = L-alanyl-L-aspartate(in) + 2 H(+)(in). It carries out the reaction L-aspartyl-glycine(out) + 2 H(+)(out) = L-aspartyl-glycine(in) + 2 H(+)(in). It catalyses the reaction glycyl-L-aspartate(out) + 2 H(+)(out) = glycyl-L-aspartate(in) + 2 H(+)(in). The catalysed reaction is glycyl-L-glutamate(out) + 2 H(+)(out) = glycyl-L-glutamate(in) + 2 H(+)(in). The enzyme catalyses L-alanyl-L-leucyl-L-alanine(out) + H(+)(out) = L-alanyl-L-leucyl-L-alanine(in) + H(+)(in). It carries out the reaction L-alanyl-L-prolylglycine(out) + H(+)(out) = L-alanyl-L-prolylglycine(in) + H(+)(in). It catalyses the reaction glycylglycyl-L-isoleucine(out) + H(+)(out) = glycylglycyl-L-isoleucine(in) + H(+)(in). The catalysed reaction is glycylglycyl-L-proline(out) + H(+)(out) = glycylglycyl-L-proline(in) + H(+)(in). The enzyme catalyses L-methionyl-L-phenylalanyl-L-methionine(out) + H(+)(out) = L-methionyl-L-phenylalanyl-L-methionine(in) + H(+)(in). It carries out the reaction N-acetyl-D-muramoyl-L-alanyl-D-isoglutamine(out) + 2 H(+)(out) = N-acetyl-D-muramoyl-L-alanyl-D-isoglutamine(in) + 2 H(+)(in). It catalyses the reaction N(alpha)-formyl-L-methionyl-L-leucyl-L-phenylalanine(out) + 2 H(+)(out) = N(alpha)-formyl-L-methionyl-L-leucyl-L-phenylalanine(in) + 2 H(+)(in). In terms of biological role, electrogenic proton-coupled amino-acid transporter that transports oligopeptides of 2 to 4 amino acids with a preference for dipeptides. Transports neutral and monovalently charged peptides with a proton to peptide stoichiometry of 1:1 or 2:1. Primarily responsible for the absorption of dietary di- and tripeptides from the small intestinal lumen. Mediates transepithelial transport of muramyl and N-formylated bacterial dipeptides contributing to recognition of pathogenic bacteria by the mucosal immune system. The polypeptide is Solute carrier family 15 member 1 (Slc15a1) (Rattus norvegicus (Rat)).